The sequence spans 156 residues: Cyanate hydratase (156 aa).

Catalysis depends on residues R96, E99, and S122.

This sequence belongs to the cyanase family.

The enzyme catalyses cyanate + hydrogencarbonate + 3 H(+) = NH4(+) + 2 CO2. Its function is as follows. Catalyzes the reaction of cyanate with bicarbonate to produce ammonia and carbon dioxide. This Burkholderia ambifaria (strain MC40-6) protein is Cyanate hydratase.